The sequence spans 870 residues: Leucine--tRNA ligase (870 aa).

Positions 42–52 (PYPSGKLHMGH) match the 'HIGH' region motif. A 'KMSKS' region motif is present at residues 629 to 633 (KMSKS). Lysine 632 provides a ligand contact to ATP.

The protein belongs to the class-I aminoacyl-tRNA synthetase family.

The protein localises to the cytoplasm. The enzyme catalyses tRNA(Leu) + L-leucine + ATP = L-leucyl-tRNA(Leu) + AMP + diphosphate. The protein is Leucine--tRNA ligase of Dechloromonas aromatica (strain RCB).